The following is a 189-amino-acid chain: GTPase NRas (189 aa).

GTP contacts are provided by residues 10–18 (GAGGVGKSA) and 29–30 (VD). The short motif at 32–40 (YDPTIEDSY) is the Effector region element. 57–61 (DTAGQ) contributes to the GTP binding site. Residue Ser-89 is modified to Phosphoserine. 116-119 (NKCD) is a binding site for GTP. The interval 166–185 (YRMKKLNSSDDGTQGCLGLS) is hypervariable region. Lys-170 participates in a covalent cross-link: Glycyl lysine isopeptide (Lys-Gly) (interchain with G-Cter in ubiquitin). Cys-181 carries the S-palmitoyl cysteine lipid modification. A lipid anchor (S-farnesyl cysteine) is attached at Cys-186. Residues 187 to 189 (AVM) constitute a propeptide, removed in mature form.

This sequence belongs to the small GTPase superfamily. Ras family. As to quaternary structure, interacts (active GTP-bound form preferentially) with RGS14. Interacts (active GTP-bound form) with RASSF7. Interacts (active GTP-bound form) with both SHOC2 and PP1c (all isoforms) to form a tertiary complex; SHOC2 and PP1c preferably bind M-Ras/MRAS, but they also bind K-Ras/KRAS, N-Ras/NRAS and H-Ras/HRAS. In terms of processing, palmitoylated by the ZDHHC9-GOLGA7 complex. Depalmitoylated by ABHD17A, ABHD17B and ABHD17C. A continuous cycle of de- and re-palmitoylation regulates rapid exchange between plasma membrane and Golgi. Post-translationally, acetylation at Lys-104 prevents interaction with guanine nucleotide exchange factors (GEFs). Ubiquitinated by the BCR(LZTR1) E3 ubiquitin ligase complex at Lys-170 in a non-degradative manner, leading to inhibit Ras signaling by decreasing Ras association with membranes. In terms of processing, phosphorylation at Ser-89 enhances NRAS association with its downstream effectors.

It is found in the cell membrane. It localises to the golgi apparatus membrane. It catalyses the reaction GTP + H2O = GDP + phosphate + H(+). Alternates between an inactive form bound to GDP and an active form bound to GTP. Activated by a guanine nucleotide-exchange factor (GEF) and inactivated by a GTPase-activating protein (GAP). In terms of biological role, ras proteins bind GDP/GTP and possess intrinsic GTPase activity. In Monodelphis domestica (Gray short-tailed opossum), this protein is GTPase NRas (NRAS).